A 361-amino-acid polypeptide reads, in one-letter code: Zinc transporter ZIP13 (361 aa).

Residues 1–6 (MPGCPC) are Lumenal-facing. The helical transmembrane segment at 7–27 (PGCGMAGQRLLFLTVLALELL) threads the bilayer. At 28–68 (ERAGGSQPALRSLGAAAACRLDNKESESWGALLSGERLDTW) the chain is on the cytoplasmic side. A helical membrane pass occupies residues 69 to 89 (ICSLLGSLMVGLSGVFPLLVI). The Lumenal portion of the chain corresponds to 90–108 (PLEMGTLLQSEAGAWRLRQ). A helical membrane pass occupies residues 109–129 (LLSFALGGLLGNVFLHLLPEA). Topologically, residues 130–150 (WAYTCNITPGGEGQSLQRQQQ) are cytoplasmic. A helical membrane pass occupies residues 151-171 (LGLWVIAGFLTFLALEKMFLN). The Lumenal segment spans residues 172–232 (SKEDPSQAPS…TIDNFTHGLA (61 aa)). A helical transmembrane segment spans residues 233-253 (VAASFLVSKKIGLLTTMAILL). The XEXPHE-motif signature appears at 254 to 259 (HEIPHE). The Cytoplasmic segment spans residues 254–275 (HEIPHEVGDFAILLRAGFDRWT). A helical transmembrane segment spans residues 276–296 (AAKLQFSTALGGLLGACFAIC). Topologically, residues 297–306 (TQSPKGVEET) are lumenal. Residues 307–327 (VVWILPFTSGGFLYIALVNVL) form a helical membrane-spanning segment. Topologically, residues 328 to 339 (PDLLEEDDPWHS) are cytoplasmic. Residues 340 to 360 (LQQVLLLCSGVLVMVLLSLFV) traverse the membrane as a helical segment. Glu-361 is a topological domain (lumenal).

The protein belongs to the ZIP transporter (TC 2.A.5) family. As to quaternary structure, homodimer. Highly expressed in some tissues such as bone and eye. Expressed in osteoblasts of tibia and of alveolar bone, in proliferative zone of growth plate, and in odontoblasts on the forming of the dentine of crown in molar tooth. Also expressed fibroblasts in reticular layer of dermis of skin.

It is found in the golgi apparatus membrane. The protein localises to the cytoplasmic vesicle membrane. It localises to the endoplasmic reticulum membrane. The catalysed reaction is Zn(2+)(in) = Zn(2+)(out). Its function is as follows. Functions as a zinc transporter transporting Zn(2+) from the Golgi apparatus to the cytosol and thus influences the zinc level at least in areas of the cytosol. May regulate beige adipocyte differentiation. The protein is Zinc transporter ZIP13 of Mus musculus (Mouse).